The following is an 815-amino-acid chain: MNIKYDVQKIEKQAQKYWKEKKSFEVIEDYSKEKYYCLSMFPYPSGRLHMGHVRNYSIGDVISRFQRMQGKNVMQPIGWDGFGLPAENAALKNKESPAKWTYKNINYMKTQLNQLGFGYDWAREITTCHPKYYRWEQWLFIKLFKKNLIYKKKAIVNWDPVDQTVLANEQVINGRGWRSNALIEKKEISQWFIRITNYAEELLNDLDKLYGWPDPVKIMQKNWIGKSIGLEITFSRRNSDPLIIYTTRPDTLMGVTYLAISFEHPLALESGKNNYQVQSFIEKCKTIQTSEILNEIMDKKGIDSGFKCIHPITNNEVPIWITNFVLMSYGTGAIMSVPAHDKRDFKFAKKYGIFIKQVINKNESIDKGPIINKGKLFNSEEFSGMDFNQAYESIAKTLIEKNLGNKKINYRLRDWGISRQRYWGCPIPIVNCKYCGSVTVKVKDLPVILPEKVKFYDVSSPIKKMPNFYQTICPKCGSKAHRETDTFDTFFESSWYFARHTCNNNNNAMLDKRVNYWLEVDQYIGGVEHSILHLLYARFFNKLLRDEGLIKYDEPFKNLLTQGMVLKNGVKMSKSKGNTVDPTKMIKKYGADTVRLFILFAAPPMQDLEWNNSGLEGAHRFIKKVYRLVSIYINDSKDYIVNHLNINFLNKTQKHIRRKIHQNLVKITDDINRRYTFNTAISTLMESVDIINKFTKTDTQSIALRSESINIILLTLSPITPHICHYLWLKLGNKKAIINEPWPKVDLKALIESEVQIIIQVDGKLRDKMMMMINTDKEILESEVLSNKNIIKFTKNKNIIKIIIIHNKLINIVTK.

Positions 42-52 (PYPSGRLHMGH) match the 'HIGH' region motif. The 'KMSKS' region signature appears at 571-575 (KMSKS). Lys574 is an ATP binding site.

This sequence belongs to the class-I aminoacyl-tRNA synthetase family.

The protein resides in the cytoplasm. The enzyme catalyses tRNA(Leu) + L-leucine + ATP = L-leucyl-tRNA(Leu) + AMP + diphosphate. The chain is Leucine--tRNA ligase from Vesicomyosocius okutanii subsp. Calyptogena okutanii (strain HA).